The chain runs to 563 residues: Endogenous retroviral envelope protein HEMO (563 aa).

A signal peptide spans 1-26 (MGSLSNYALLQLTLTAFLTILVQPQH). Residues 27-488 (LLAPVFRTLS…IFAKVGDWFR (462 aa)) lie on the Extracellular side of the membrane. 2 N-linked (GlcNAc...) asparagine glycosylation sites follow: Asn-122 and Asn-192. A helical transmembrane segment spans residues 489-509 (SWGYVLLIVLFCLFIFVLIYV). The Cytoplasmic portion of the chain corresponds to 510 to 563 (RVFRKSRRSLNSQPLNLALSPQQSAQLLVSETSCQVSNRAMKGLTTHQYDTSLL).

Belongs to the gamma type-C retroviral envelope protein family. Post-translationally, N-glycosylated. Cleaved by some metalloproteinase at 432-Gln-Arg-433 (mainly) or 433-Arg-Gln-434, leading to release the secreted form (Endogenous retroviral envelope protein HEMO, secreted form) in the extracellular medium. As to expression, expressed at high level in the placenta and stem cells (at protein level). Also expressed in the kidney but at a lower level. Endogenous retroviral envelope protein HEMO, secreted form: Present in the blood of pregnant women (at protein level).

The protein resides in the cell membrane. Its subcellular location is the secreted. Functionally, endogenous envelope proteins originate from retroviral envelope proteins, which mediate receptor recognition and membrane fusion during early infection. Endogenous envelope proteins may have kept, lost or modified their original function during evolution. The chain is Endogenous retroviral envelope protein HEMO from Homo sapiens (Human).